Reading from the N-terminus, the 89-residue chain is Small ribosomal subunit protein bS20 (89 aa).

It belongs to the bacterial ribosomal protein bS20 family.

In terms of biological role, binds directly to 16S ribosomal RNA. This Stenotrophomonas maltophilia (strain K279a) protein is Small ribosomal subunit protein bS20.